A 194-amino-acid polypeptide reads, in one-letter code: Crossover junction endodeoxyribonuclease RuvC (194 aa).

Residues Asp7, Glu68, and Asp141 contribute to the active site. Mg(2+) contacts are provided by Asp7, Glu68, and Asp141.

Belongs to the RuvC family. Homodimer which binds Holliday junction (HJ) DNA. The HJ becomes 2-fold symmetrical on binding to RuvC with unstacked arms; it has a different conformation from HJ DNA in complex with RuvA. In the full resolvosome a probable DNA-RuvA(4)-RuvB(12)-RuvC(2) complex forms which resolves the HJ. Mg(2+) is required as a cofactor.

Its subcellular location is the cytoplasm. It carries out the reaction Endonucleolytic cleavage at a junction such as a reciprocal single-stranded crossover between two homologous DNA duplexes (Holliday junction).. Its function is as follows. The RuvA-RuvB-RuvC complex processes Holliday junction (HJ) DNA during genetic recombination and DNA repair. Endonuclease that resolves HJ intermediates. Cleaves cruciform DNA by making single-stranded nicks across the HJ at symmetrical positions within the homologous arms, yielding a 5'-phosphate and a 3'-hydroxyl group; requires a central core of homology in the junction. The consensus cleavage sequence is 5'-(A/T)TT(C/G)-3'. Cleavage occurs on the 3'-side of the TT dinucleotide at the point of strand exchange. HJ branch migration catalyzed by RuvA-RuvB allows RuvC to scan DNA until it finds its consensus sequence, where it cleaves and resolves the cruciform DNA. This Bifidobacterium longum (strain DJO10A) protein is Crossover junction endodeoxyribonuclease RuvC.